Here is a 466-residue protein sequence, read N- to C-terminus: Glutamate--tRNA ligase (466 aa).

Positions 10 to 20 (PSPTGFLHIGG) match the 'HIGH' region motif. Positions 252 to 256 (KLSKR) match the 'KMSKS' region motif. Lys-255 lines the ATP pocket.

It belongs to the class-I aminoacyl-tRNA synthetase family. Glutamate--tRNA ligase type 1 subfamily. As to quaternary structure, monomer.

It localises to the cytoplasm. It carries out the reaction tRNA(Glu) + L-glutamate + ATP = L-glutamyl-tRNA(Glu) + AMP + diphosphate. In terms of biological role, catalyzes the attachment of glutamate to tRNA(Glu) in a two-step reaction: glutamate is first activated by ATP to form Glu-AMP and then transferred to the acceptor end of tRNA(Glu). This is Glutamate--tRNA ligase from Mycoplasmopsis synoviae (strain 53) (Mycoplasma synoviae).